A 397-amino-acid chain; its full sequence is Formate-dependent phosphoribosylglycinamide formyltransferase (397 aa).

Residues glutamate 22–leucine 23 and glutamate 82 contribute to the N(1)-(5-phospho-beta-D-ribosyl)glycinamide site. ATP contacts are provided by residues arginine 114, lysine 155, serine 160–glutamine 165, glutamate 195–valine 198, and glutamate 203. Positions cysteine 119–leucine 312 constitute an ATP-grasp domain. Positions 271 and 283 each coordinate Mg(2+). N(1)-(5-phospho-beta-D-ribosyl)glycinamide is bound by residues aspartate 290, lysine 360, and arginine 367–arginine 368.

It belongs to the PurK/PurT family. As to quaternary structure, homodimer.

It carries out the reaction N(1)-(5-phospho-beta-D-ribosyl)glycinamide + formate + ATP = N(2)-formyl-N(1)-(5-phospho-beta-D-ribosyl)glycinamide + ADP + phosphate + H(+). Its pathway is purine metabolism; IMP biosynthesis via de novo pathway; N(2)-formyl-N(1)-(5-phospho-D-ribosyl)glycinamide from N(1)-(5-phospho-D-ribosyl)glycinamide (formate route): step 1/1. In terms of biological role, involved in the de novo purine biosynthesis. Catalyzes the transfer of formate to 5-phospho-ribosyl-glycinamide (GAR), producing 5-phospho-ribosyl-N-formylglycinamide (FGAR). Formate is provided by PurU via hydrolysis of 10-formyl-tetrahydrofolate. This Alcanivorax borkumensis (strain ATCC 700651 / DSM 11573 / NCIMB 13689 / SK2) protein is Formate-dependent phosphoribosylglycinamide formyltransferase.